A 1608-amino-acid chain; its full sequence is MREAAAALVPPPAFAVTPAAAMEEPPPPPPPPPPPPEPETESEPECCLAARQEGTLGDSACKSPESDLEDFSDETNTENLYGTSPPSTPRQMKRMSTKHQRNNVGRPASRSNLKEKMNAPNQPPHKDTGKTVENVEEYSYKQEKKIRAALRTTERDRKKNVQCSFMLDSVGGSLPKKSIPDVDLNKPYLSLGCSNAKLPVSVPMPIARPARQTSRTDCPADRLKFFETLRLLLKLTSVSKKKDREQRGQENTSGFWLNRSNELIWLELQAWHAGRTINDQDFFLYTARQAIPDIINEILTFKVDYGSFAFVRDRAGFNGTSVEGQCKATPGTKIVGYSTHHEHLQRQRVSFEQVKRIMELLEYIEALYPSLQALQKDYEKYAAKDFQDRVQALCLWLNITKDLNQKLRIMGTVLGIKNLSDIGWPVFEIPSPRPSKGNEPEYEGDDTEGELKELESSTDESEEEQISDPRVPEIRQPIDNSFDIQSRDCISKKLERLESEDDSLGWGAPDWSTEAGFSRHCLTSIYRPFVDKALKQMGLRKLILRLHKLMDGSLQRARIALVKNDRPVEFSEFPDPMWGSDYVQLSRTPPSSEEKCSAVSWEELKAMDLPSFEPAFLVLCRVLLNVIHECLKLRLEQRPAGEPSLLSIKQLVRECKEVLKGGLLMKQYYQFMLQEVLEDLEKPDCNIDAFEEDLHKMLMVYFDYMRSWIQMLQQLPQASHSLKNLLEEEWNFTKEITHYIRGGEAQAGKLFCDIAGMLLKSTGSFLEFGLQESCAEFWTSADDSSASDEIRRSVIEISRALKELFHEARERASKALGFAKMLRKDLEIAAEFRLSAPVRDLLDVLKSKQYVKVQIPGLENLQMFVPDTLAEEKSIILQLLNAAAGKDCSKDSDDVLIDAYLLLTKHGDRARDSEDSWGTWEAQPVKVVPQVETVDTLRSMQVDNLLLVVMQSAHLTIQRKAFQQSIEGLMTLCQEQTSSQPVIAKALQQLKNDALELCNRISNAIDRVDHMFTSEFDAEVDESESVTLQQYYREAMIQGYNFGFEYHKEVVRLMSGEFRQKIGDKYISFARKWMNYVLTKCESGRGTRPRWATQGFDFLQAIEPAFISALPEDDFLSLQALMNECIGHVIGKPHSPVTGLYLAIHRNSPRPMKVPRCHSDPPNPHLIIPTPEGFSTRSMPSDARSHGSPAAAAAAAAAAVAASRPSPSGGDSVLPKSISSAHDTRGSSVPENDRLASIAAELQFRSLSRHSSPTEERDEPAYPRGDSSGSTRRSWELRTLISQSKDTASKLGPIEAIQKSVRLFEEKRYREMRRKNIIGQVCDTPKSYDNVMHVGLRKVTFKWQRGNKIGEGQYGKVYTCISVDTGELMAMKEIRFQPNDHKTIKETADELKIFEGIKHPNLVRYFGVELHREEMYIFMEYCDEGTLEEVSRLGLQEHVIRLYSKQITIAINVLHEHGIVHRDIKGANIFLTSSGLIKLGDFGCSVKLKNNAQTMPGEVNSTLGTAAYMAPEVITRAKGEGHGRAADIWSLGCVVIEMVTGKRPWHEYEHNFQIMYKVGMGHKPPIPERLSPEGKDFLSHCLESDPKMRWTASQLLDHSFVKVCTDEE.

Positions 1 to 23 (MREAAAALVPPPAFAVTPAAAME) are enriched in low complexity. 2 disordered regions span residues 1–136 (MREA…ENVE) and 429–478 (IPSP…RQPI). Residues 24 to 37 (EPPPPPPPPPPPPE) show a composition bias toward pro residues. A compositionally biased stretch (acidic residues) spans 66–76 (SDLEDFSDETN). Residue S84 is modified to Phosphoserine. Basic residues predominate over residues 91-101 (QMKRMSTKHQR). Residue S431 is modified to Phosphoserine. A Phosphothreonine modification is found at T447. 2 positions are modified to phosphoserine: S456 and S457. Over residues 456 to 466 (SSTDESEEEQI) the composition is skewed to acidic residues. Phosphothreonine is present on T458. Residues S461, S481, and S499 each carry the phosphoserine modification. Disordered regions lie at residues 1157–1190 (CHSD…GSPA), 1202–1231 (ASRP…SVPE), and 1244–1274 (FRSL…TRRS). Polar residues predominate over residues 1217-1230 (SISSAHDTRGSSVP). 2 positions are modified to phosphoserine: S1252 and S1274. Positions 1252 to 1261 (SPTEERDEPA) are enriched in basic and acidic residues. Positions 1343–1601 (WQRGNKIGEG…ASQLLDHSFV (259 aa)) constitute a Protein kinase domain. Residues 1349–1357 (IGEGQYGKV) and K1372 contribute to the ATP site. The active-site Proton acceptor is the D1463.

The protein belongs to the protein kinase superfamily. STE Ser/Thr protein kinase family. MAP kinase kinase kinase subfamily. As to quaternary structure, monomer and homodimer. Homodimerization enhances kinase activity. Interacts with TRAF4; this promotes homodimerization. Binds both upstream activators and downstream substrates in multimolecular complexes. Interacts with AXIN1 and DIXDC1; interaction with DIXDC1 prevents interaction with AXIN1. Interacts with GADD45 and MAP2K6. Interacts with ZFP36; this interaction enhances the association with SH3KBP1/CIN85. Interacts with SH3KBP1; this interaction enhances the association with ZFP36. Interacts with CDC42. The cofactor is Mg(2+). As to expression, expressed at high levels in heart, placenta, skeletal muscle and pancreas, and at lower levels in other tissues.

Its subcellular location is the cytoplasm. It localises to the perinuclear region. It carries out the reaction L-seryl-[protein] + ATP = O-phospho-L-seryl-[protein] + ADP + H(+). The enzyme catalyses L-threonyl-[protein] + ATP = O-phospho-L-threonyl-[protein] + ADP + H(+). Its activity is regulated as follows. N-terminal autoinhibitory domain interacts with the C-terminal kinase domain, inhibiting kinase activity, and preventing interaction with its substrate, MAP2K6. The GADD45 proteins activate the kinase by binding to the N-terminal domain. Activated by phosphorylation on Thr-1505. Functionally, component of a protein kinase signal transduction cascade. Activates the CSBP2, P38 and JNK MAPK pathways, but not the ERK pathway. Specifically phosphorylates and activates MAP2K4 and MAP2K6. The chain is Mitogen-activated protein kinase kinase kinase 4 (MAP3K4) from Homo sapiens (Human).